An 88-amino-acid chain; its full sequence is MATNDKTMFFDFGQERQEDIKQTLKTVYESLEEKGYNPINQIVGYLLSGDPAYIPRLNDARNLIRQHERDEIIEELVRSYLKNNGETK.

Belongs to the UPF0297 family.

This chain is UPF0297 protein LAR_0520, found in Limosilactobacillus reuteri subsp. reuteri (strain JCM 1112) (Lactobacillus reuteri).